Consider the following 907-residue polypeptide: Alanine--tRNA ligase (907 aa).

Residues His581, His585, Cys683, and His687 each contribute to the Zn(2+) site.

Belongs to the class-II aminoacyl-tRNA synthetase family. Zn(2+) serves as cofactor.

The protein resides in the cytoplasm. The catalysed reaction is tRNA(Ala) + L-alanine + ATP = L-alanyl-tRNA(Ala) + AMP + diphosphate. In terms of biological role, catalyzes the attachment of alanine to tRNA(Ala) in a two-step reaction: alanine is first activated by ATP to form Ala-AMP and then transferred to the acceptor end of tRNA(Ala). Also edits incorrectly charged Ser-tRNA(Ala) and Gly-tRNA(Ala) via its editing domain. This chain is Alanine--tRNA ligase, found in Bdellovibrio bacteriovorus (strain ATCC 15356 / DSM 50701 / NCIMB 9529 / HD100).